The following is a 186-amino-acid chain: Elongation factor P (186 aa).

Belongs to the elongation factor P family.

It is found in the cytoplasm. It functions in the pathway protein biosynthesis; polypeptide chain elongation. Functionally, involved in peptide bond synthesis. Stimulates efficient translation and peptide-bond synthesis on native or reconstituted 70S ribosomes in vitro. Probably functions indirectly by altering the affinity of the ribosome for aminoacyl-tRNA, thus increasing their reactivity as acceptors for peptidyl transferase. The polypeptide is Elongation factor P (Pelagibacter ubique (strain HTCC1062)).